Consider the following 360-residue polypeptide: Probable arginine kinase ZC434.8 (360 aa).

Residues 10-92 form the Phosphagen kinase N-terminal domain; it reads SIEEVYTKLQ…FNPVIEEYHN (83 aa). Residue 65 to 69 participates in substrate binding; it reads GVGIY. In terms of domain architecture, Phosphagen kinase C-terminal spans 122 to 359; the sequence is FIVSTRIRCG…KKLIELEKAA (238 aa). ATP contacts are provided by residues 125-129 and His189; that span reads STRIR. Glu229 contacts substrate. Residue Arg233 coordinates ATP. Cys275 is a binding site for substrate. ATP is bound by residues 284–288, 312–317, and Asp327; these read RASVH and RGIHGE. Glu317 contributes to the substrate binding site.

This sequence belongs to the ATP:guanido phosphotransferase family.

The catalysed reaction is L-arginine + ATP = N(omega)-phospho-L-arginine + ADP + H(+). The chain is Probable arginine kinase ZC434.8 from Caenorhabditis elegans.